The following is an 816-amino-acid chain: H(+)/Cl(-) exchange transporter 5 (816 aa).

The segment at 1 to 28 is disordered; that stretch reads MAMWQGAMDNRGFQQGSFNSFQSSSSDE. Residues 1–124 are Cytoplasmic-facing; the sequence is MAMWQGAMDN…WALIHSVSDA (124 aa). The span at 12-25 shows a compositional bias: low complexity; it reads GFQQGSFNSFQSSS. A run of 2 helical transmembrane segments spans residues 125-162 and 208-231; these read FSGW…ICTE and VNYF…VKVF. The Selectivity filter part_1 signature appears at 237 to 241; sequence GSGIP. S238 serves as a coordination point for chloride. Positions 240–247 form an intramembrane region, helical; that stretch reads IPEIKTIL. 2 consecutive transmembrane segments (helical) span residues 256–275 and 281–300; these read LGKW…VSSG and EGPL…HCFN. A Selectivity filter part_2 motif is present at residues 279 to 283; the sequence is GKEGP. 2 consecutive intramembrane regions (helical) follow at residues 312 to 324 and 328 to 336; these read VLSA…VSVA and PIGGVLFSL. The next 5 helical transmembrane spans lie at 348–366, 389–414, 422–442, 498–518, and 523–542; these read LWRS…RSIN, LVPF…IAWC, LGKY…ILAF, MWQL…TFGM, and GLFI…LGVG. Residues 523–527 carry the Selectivity filter part_3 motif; the sequence is GLFIP. Position 525 (F525) interacts with chloride. An intramembrane region (helical) is located at residues 570-584; the sequence is GLYAMVGAAACLGGV. An intramembrane region (note=Loop between two helices) is located at residues 585-587; the sequence is TRM. The helical intramembrane region spans 588 to 599; sequence TVSLVVIMFELT. The note=Loop between two helices intramembrane region spans 600–604; the sequence is GGLEY. A helical membrane pass occupies residues 605 to 622; sequence IVPLMAAAMTSKWVADAL. The Cytoplasmic segment spans residues 623–816; that stretch reads GREGIYDAHI…NQDPDSILFN (194 aa). Y628 serves as a coordination point for chloride. CBS domains follow at residues 656 to 720 and 752 to 812; these read MKPR…ARKK and ILDL…DPDS. ATP is bound by residues T666, 687 to 689, and 794 to 797; these read YSG and TKKD.

The protein belongs to the chloride channel (TC 2.A.49) family. ClC-5/CLCN5 subfamily. In terms of assembly, interacts with NEDD4 and NEDD4L. In terms of processing, ubiquitinated by NEDD4L in the presence of albumin; which promotes endocytosis and proteasomal degradation.

It localises to the golgi apparatus membrane. The protein resides in the endosome membrane. It is found in the cell membrane. The enzyme catalyses 2 chloride(in) + H(+)(out) = 2 chloride(out) + H(+)(in). In terms of biological role, proton-coupled chloride transporter. Functions as antiport system and exchanges chloride ions against protons. Important for normal acidification of the endosome lumen. May play an important role in renal tubular function. The CLC channel family contains both chloride channels and proton-coupled anion transporters that exchange chloride or another anion for protons. The absence of conserved gating glutamate residues is typical for family members that function as channels. This chain is H(+)/Cl(-) exchange transporter 5 (CLCN5), found in Sus scrofa (Pig).